A 171-amino-acid polypeptide reads, in one-letter code: UPF0763 protein HPP12_0677 (171 aa).

The protein belongs to the UPF0763 family.

In Helicobacter pylori (strain P12), this protein is UPF0763 protein HPP12_0677.